The sequence spans 377 residues: Sodium-dependent organic anion transporter (377 aa).

Residues 1 to 29 (MRANCSSSSACPANSSEEELPVGLEVHGN) are Extracellular-facing. N-linked (GlcNAc...) asparagine glycosylation occurs at Asn4. The helical transmembrane segment at 30 to 50 (LELVFTVVSTVMMGLLMFSLG) threads the bilayer. Over 51–67 (CSVEIRKLWSHIRRPWG) the chain is Cytoplasmic. A helical transmembrane segment spans residues 68–88 (IAVGLLCQFGLMPFTAYLLAI). Over 89–97 (SFSLKPVQA) the chain is Extracellular. The chain crosses the membrane as a helical span at residues 98 to 118 (IAVLIMGCCPGGTISNIFTFW). The Cytoplasmic portion of the chain corresponds to 119-133 (VDGDMDLSISMTTCS). The helical transmembrane segment at 134–154 (TVAALGMMPLCIYLYTWSWSL) threads the bilayer. Residues 155–159 (QQNLT) are Extracellular-facing. Residue Asn157 is glycosylated (N-linked (GlcNAc...) asparagine). A helical transmembrane segment spans residues 160–180 (IPYQNIGITLVCLTIPVAFGV). The Cytoplasmic segment spans residues 181-195 (YVNYRWPKQSKIILK). A helical membrane pass occupies residues 196-216 (IGAVVGGVLLLVVAVAGVVLA). Topologically, residues 217–226 (KGSWNSDITL) are extracellular. Residues 227 to 247 (LTISFIFPLIGHVTGFLLALF) form a helical membrane-spanning segment. Over 248-266 (THQSWQRCRTISLETGAQN) the chain is Cytoplasmic. A helical transmembrane segment spans residues 267–285 (IQMCITMLQLSFTAEHLVQ). The Extracellular portion of the chain corresponds to 286-290 (MLSFP). Residues 291-311 (LAYGLFQLIDGFLIVAAYQTY) traverse the membrane as a helical segment. Topologically, residues 312–377 (KRRLKNKHGK…EPVGHITSCE (66 aa)) are cytoplasmic.

The protein belongs to the bile acid:sodium symporter (BASS) (TC 2.A.28) family. In terms of processing, glycosylated. Highly expressed in testis, placenta and pancreas. Moderately expressed in heart, lung and mammary gland. Weakly expressed in brain, colon, kidney, liver, ovary, prostate, small intestine, spleen and thymus.

The protein resides in the membrane. It carries out the reaction estrone 3-sulfate(out) + 2 Na(+)(out) = estrone 3-sulfate(in) + 2 Na(+)(in). It catalyses the reaction 17beta-estradiol 3-sulfate(out) + 2 Na(+)(out) = 17beta-estradiol 3-sulfate(in) + 2 Na(+)(in). The enzyme catalyses dehydroepiandrosterone 3-sulfate(out) + 2 Na(+)(out) = dehydroepiandrosterone 3-sulfate(in) + 2 Na(+)(in). The catalysed reaction is androst-5-ene-diol 3-sulfate(out) + 2 Na(+)(out) = androst-5-ene-diol 3-sulfate(in) + 2 Na(+)(in). It carries out the reaction pregnenolone sulfate(out) + 2 Na(+)(out) = pregnenolone sulfate(in) + 2 Na(+)(in). It catalyses the reaction taurolithocholate 3-sulfate(out) + 2 Na(+)(out) = taurolithocholate 3-sulfate(in) + 2 Na(+)(in). The enzyme catalyses androsterone 3alpha-sulfate(out) + 2 Na(+)(out) = androsterone 3alpha-sulfate(in) + 2 Na(+)(in). The catalysed reaction is 5alpha-dihydrotestosterone sulfate(out) + 2 Na(+)(out) = 5alpha-dihydrotestosterone sulfate(in) + 2 Na(+)(in). It carries out the reaction 17beta-estradiol 17-sulfate(out) + 2 Na(+)(out) = 17beta-estradiol 17-sulfate(in) + 2 Na(+)(in). It catalyses the reaction 17alpha-hydroxypregnenolone 3-sulfate(out) + 2 Na(+)(out) = 17alpha-hydroxypregnenolone 3-sulfate(in) + 2 Na(+)(in). The enzyme catalyses epiandrosterone 3-sulfate(out) + 2 Na(+)(out) = epiandrosterone 3-sulfate(in) + 2 Na(+)(in). The catalysed reaction is epitestosterone 17-sulfate(out) + 2 Na(+)(out) = epitestosterone 17-sulfate(in) + 2 Na(+)(in). It carries out the reaction testosterone 17-sulfate(out) + 2 Na(+)(out) = testosterone 17-sulfate(in) + 2 Na(+)(in). It catalyses the reaction 16alpha-hydroxydehydroepiandrosterone 3-sulfate(out) + 2 Na(+)(out) = 16alpha-hydroxydehydroepiandrosterone 3-sulfate(in) + 2 Na(+)(in). Its function is as follows. Transports sulfoconjugated steroid hormones from the extracellular compartment into the cytosol in a sodium-dependent manner without hydrolysis. Steroid sulfate hormones are commonly considered to be biologically inactive metabolites, that may be activated by steroid sulfatases into free steroids. May play an important role by delivering sulfoconjugated steroids to specific target cells in reproductive organs. May play a role transporting the estriol precursor 16alpha-hydroxydehydroepiandrosterone 3-sulfate (16a-OH-DHEAS) at the fetal blood vessel endothelium. Can also transport other sulfoconjugated molecules such as taurolithocholic acid-3-sulfate and sulfoconjugated pyrenes. In Homo sapiens (Human), this protein is Sodium-dependent organic anion transporter (SLC10A6).